Consider the following 339-residue polypeptide: tRNA pseudouridine synthase B (339 aa).

Residue D40 is the Nucleophile of the active site. Positions 262 to 307 (FRRLSKFAYREEFEENTERSTAAYTLVREDANTGLTYKLPLEVELS) constitute an RPE1 insert domain.

The protein belongs to the pseudouridine synthase TruB family. Type 1 subfamily.

The catalysed reaction is uridine(55) in tRNA = pseudouridine(55) in tRNA. Functionally, responsible for synthesis of pseudouridine from uracil-55 in the psi GC loop of transfer RNAs. The sequence is that of tRNA pseudouridine synthase B from Rickettsia felis (strain ATCC VR-1525 / URRWXCal2) (Rickettsia azadi).